The following is a 517-amino-acid chain: 2,3-bisphosphoglycerate-independent phosphoglycerate mutase (517 aa).

2 residues coordinate Mn(2+): Asp14 and Ser64. Residue Ser64 is the Phosphoserine intermediate of the active site. Substrate is bound by residues His125, 155-156 (RD), Arg187, Arg193, 263-266 (RSDR), and Lys337. Mn(2+) is bound by residues Asp404, His408, Asp445, His446, and His464.

Belongs to the BPG-independent phosphoglycerate mutase family. In terms of assembly, monomer. It depends on Mn(2+) as a cofactor.

The enzyme catalyses (2R)-2-phosphoglycerate = (2R)-3-phosphoglycerate. Its pathway is carbohydrate degradation; glycolysis; pyruvate from D-glyceraldehyde 3-phosphate: step 3/5. Catalyzes the interconversion of 2-phosphoglycerate and 3-phosphoglycerate. The protein is 2,3-bisphosphoglycerate-independent phosphoglycerate mutase of Nitrosococcus oceani (strain ATCC 19707 / BCRC 17464 / JCM 30415 / NCIMB 11848 / C-107).